Reading from the N-terminus, the 376-residue chain is Flap endonuclease 1 (376 aa).

The segment at 1-105 is N-domain; sequence MGIKGLSKLL…GELNKRKENA (105 aa). Asp-34 is a binding site for Mg(2+). The DNA site is built by Arg-47 and Arg-71. Mg(2+) contacts are provided by Asp-87, Glu-159, Glu-161, Asp-180, and Asp-182. An I-domain region spans residues 123-254; sequence QAKKLMKRTA…ITAFELIQQY (132 aa). Position 159 (Glu-159) interacts with DNA. DNA contacts are provided by Gly-232 and Asp-234. Asp-234 lines the Mg(2+) pocket. Residues 336-344 are interaction with PCNA; sequence AQGRLDSFF. The disordered stretch occupies residues 352–376; sequence SKSEAASGVKRKKPTTKAKESRKKK. Basic residues predominate over residues 360-376; sequence VKRKKPTTKAKESRKKK.

This sequence belongs to the XPG/RAD2 endonuclease family. FEN1 subfamily. As to quaternary structure, interacts with PCNA. Three molecules of FEN1 bind to one PCNA trimer with each molecule binding to one PCNA monomer. PCNA stimulates the nuclease activity without altering cleavage specificity. Mg(2+) is required as a cofactor. In terms of processing, phosphorylated. Phosphorylation upon DNA damage induces relocalization to the nuclear plasma.

Its subcellular location is the nucleus. The protein localises to the nucleolus. It is found in the nucleoplasm. The protein resides in the mitochondrion. In terms of biological role, structure-specific nuclease with 5'-flap endonuclease and 5'-3' exonuclease activities involved in DNA replication and repair. During DNA replication, cleaves the 5'-overhanging flap structure that is generated by displacement synthesis when DNA polymerase encounters the 5'-end of a downstream Okazaki fragment. It enters the flap from the 5'-end and then tracks to cleave the flap base, leaving a nick for ligation. Also involved in the long patch base excision repair (LP-BER) pathway, by cleaving within the apurinic/apyrimidinic (AP) site-terminated flap. Acts as a genome stabilization factor that prevents flaps from equilibrating into structures that lead to duplications and deletions. Also possesses 5'-3' exonuclease activity on nicked or gapped double-stranded DNA, and exhibits RNase H activity. Also involved in replication and repair of rDNA and in repairing mitochondrial DNA. The protein is Flap endonuclease 1 of Entamoeba dispar (strain ATCC PRA-260 / SAW760).